The chain runs to 312 residues: Very-long-chain 3-oxoacyl-CoA reductase (312 aa).

The helical transmembrane segment at 4-24 (ALPAAGFLYWVGAGTVAYLAL) threads the bilayer. Residue 50 to 79 (GEWAVVTGGTDGIGKSYAEELAKRGMKVVL) participates in NADP(+) binding. 2 consecutive transmembrane segments (helical) span residues 182-202 (GAIL…LTIY) and 271-291 (GYLI…WIYL). Ser189 provides a ligand contact to substrate. Residue Tyr202 is the Proton acceptor of the active site. A Di-lysine motif motif is present at residues 308-312 (KIKKN).

The protein belongs to the short-chain dehydrogenases/reductases (SDR) family. 17-beta-HSD 3 subfamily.

It localises to the endoplasmic reticulum membrane. It catalyses the reaction a very-long-chain (3R)-3-hydroxyacyl-CoA + NADP(+) = a very-long-chain 3-oxoacyl-CoA + NADPH + H(+). The catalysed reaction is 17beta-estradiol + NAD(+) = estrone + NADH + H(+). It carries out the reaction 17beta-estradiol + NADP(+) = estrone + NADPH + H(+). The enzyme catalyses 3-oxooctadecanoyl-CoA + NADPH + H(+) = (3R)-hydroxyoctadecanoyl-CoA + NADP(+). It catalyses the reaction (7Z,10Z,13Z,16Z)-3-oxodocosatetraenoyl-CoA + NADPH + H(+) = (3R)-hydroxy-(7Z,10Z,13Z,16Z)-docosatetraenoyl-CoA + NADP(+). The catalysed reaction is 3-oxo-(7Z,10Z,13Z,16Z,19Z)-docosapentaenoyl-CoA + NADPH + H(+) = (3R)-hydroxy-(7Z,10Z,13Z,16Z,19Z)-docosapentaenoyl-CoA + NADP(+). It carries out the reaction (8Z,11Z,14Z)-3-oxoeicosatrienoyl-CoA + NADPH + H(+) = (3R)-hydroxy-(8Z,11Z,14Z)-eicosatrienoyl-CoA + NADP(+). Its pathway is lipid metabolism; fatty acid biosynthesis. It functions in the pathway steroid biosynthesis; estrogen biosynthesis. Functionally, catalyzes the second of the four reactions of the long-chain fatty acids elongation cycle. This endoplasmic reticulum-bound enzymatic process, allows the addition of two carbons to the chain of long- and very long-chain fatty acids/VLCFAs per cycle. This enzyme has a 3-ketoacyl-CoA reductase activity, reducing 3-ketoacyl-CoA to 3-hydroxyacyl-CoA, within each cycle of fatty acid elongation. Thereby, it may participate in the production of VLCFAs of different chain lengths that are involved in multiple biological processes as precursors of membrane lipids and lipid mediators. May also catalyze the transformation of estrone (E1) into estradiol (E2) and play a role in estrogen formation. The polypeptide is Very-long-chain 3-oxoacyl-CoA reductase (HSD17B12) (Macaca fascicularis (Crab-eating macaque)).